Consider the following 264-residue polypeptide: Undecaprenyl-diphosphatase (264 aa).

The next 7 helical transmembrane spans lie at 38–58, 75–95, 106–126, 136–156, 181–201, 217–237, and 242–262; these read RSDFFNIVIQAGAIVAVVLVF, REYVFKLGAAFLVTAVVGLVV, VSPVAWALIIGGVWMLLVEAY, VTWTVAIGVGLAQVVAGVFPG, FVFLVGIPTMFAASAYTFLEM, VAFLAAAITGFVVVKWLMGYI, and FTAFAIYRIALGAALLLWLPS.

Belongs to the UppP family.

It is found in the cell membrane. It carries out the reaction di-trans,octa-cis-undecaprenyl diphosphate + H2O = di-trans,octa-cis-undecaprenyl phosphate + phosphate + H(+). Functionally, catalyzes the dephosphorylation of undecaprenyl diphosphate (UPP). Confers resistance to bacitracin. This chain is Undecaprenyl-diphosphatase, found in Stenotrophomonas maltophilia (strain K279a).